A 1019-amino-acid chain; its full sequence is Outer capsid protein P3 (1019 aa).

It belongs to the phytoreovirus inner capsid protein P3 family. As to quaternary structure, homodimer. Homomultimer.

The protein resides in the virion. It localises to the host cytoplasm. Its function is as follows. Capsid protein which self-assembles to form the inner icosahedral capsid with a T=2 symmetry, and consisting of 60 P3 dimers. The chain is Outer capsid protein P3 from Alopecurus aequalis (Barnyard grass).